The primary structure comprises 274 residues: Formamidopyrimidine-DNA glycosylase (274 aa).

The active-site Schiff-base intermediate with DNA is Pro-2. Residue Glu-3 is the Proton donor of the active site. Lys-59 functions as the Proton donor; for beta-elimination activity in the catalytic mechanism. Positions 93, 112, and 155 each coordinate DNA. The FPG-type zinc-finger motif lies at 240 to 274 (QVYGRTGRPCPRCGQPLERVRLGGRSTHFCPRCQV). Arg-264 functions as the Proton donor; for delta-elimination activity in the catalytic mechanism.

It belongs to the FPG family. As to quaternary structure, monomer. It depends on Zn(2+) as a cofactor.

The enzyme catalyses Hydrolysis of DNA containing ring-opened 7-methylguanine residues, releasing 2,6-diamino-4-hydroxy-5-(N-methyl)formamidopyrimidine.. It catalyses the reaction 2'-deoxyribonucleotide-(2'-deoxyribose 5'-phosphate)-2'-deoxyribonucleotide-DNA = a 3'-end 2'-deoxyribonucleotide-(2,3-dehydro-2,3-deoxyribose 5'-phosphate)-DNA + a 5'-end 5'-phospho-2'-deoxyribonucleoside-DNA + H(+). Its function is as follows. Involved in base excision repair of DNA damaged by oxidation or by mutagenic agents. Acts as a DNA glycosylase that recognizes and removes damaged bases. Has a preference for oxidized purines, such as 7,8-dihydro-8-oxoguanine (8-oxoG). Has AP (apurinic/apyrimidinic) lyase activity and introduces nicks in the DNA strand. Cleaves the DNA backbone by beta-delta elimination to generate a single-strand break at the site of the removed base with both 3'- and 5'-phosphates. The chain is Formamidopyrimidine-DNA glycosylase from Moorella thermoacetica (strain ATCC 39073 / JCM 9320).